Here is a 357-residue protein sequence, read N- to C-terminus: tRNA/tmRNA (uracil-C(5))-methyltransferase (357 aa).

S-adenosyl-L-methionine contacts are provided by Gln-180, Tyr-209, Asn-214, Glu-230, and Asp-290. The active-site Nucleophile is the Cys-315. The active-site Proton acceptor is Glu-349.

The protein belongs to the class I-like SAM-binding methyltransferase superfamily. RNA M5U methyltransferase family. TrmA subfamily.

It carries out the reaction uridine(54) in tRNA + S-adenosyl-L-methionine = 5-methyluridine(54) in tRNA + S-adenosyl-L-homocysteine + H(+). The catalysed reaction is uridine(341) in tmRNA + S-adenosyl-L-methionine = 5-methyluridine(341) in tmRNA + S-adenosyl-L-homocysteine + H(+). Dual-specificity methyltransferase that catalyzes the formation of 5-methyluridine at position 54 (m5U54) in all tRNAs, and that of position 341 (m5U341) in tmRNA (transfer-mRNA). The chain is tRNA/tmRNA (uracil-C(5))-methyltransferase from Campylobacter jejuni (strain RM1221).